Here is a 364-residue protein sequence, read N- to C-terminus: Dihydroorotate dehydrogenase (quinone) (364 aa).

FMN is bound by residues 62-66 and T86; that span reads AGFDK. K66 serves as a coordination point for substrate. 111-115 contributes to the substrate binding site; the sequence is NRMGF. FMN is bound by residues N142 and N175. A substrate-binding site is contributed by N175. The active-site Nucleophile is the S178. N180 contributes to the substrate binding site. Positions 216 and 244 each coordinate FMN. 245-246 lines the substrate pocket; the sequence is NT. FMN contacts are provided by residues G267, G296, and 317–318; that span reads YT.

The protein belongs to the dihydroorotate dehydrogenase family. Type 2 subfamily. Monomer. It depends on FMN as a cofactor.

The protein localises to the cell membrane. The enzyme catalyses (S)-dihydroorotate + a quinone = orotate + a quinol. It functions in the pathway pyrimidine metabolism; UMP biosynthesis via de novo pathway; orotate from (S)-dihydroorotate (quinone route): step 1/1. Catalyzes the conversion of dihydroorotate to orotate with quinone as electron acceptor. This chain is Dihydroorotate dehydrogenase (quinone), found in Anaeromyxobacter dehalogenans (strain 2CP-1 / ATCC BAA-258).